Consider the following 483-residue polypeptide: MERRQSICPQGRLPLYSAVVRSTSDIQASVRFASRHNLRLVIKNTGHDSAGRSSAPHSFQIHTSLLQNISLHKNFIARGSTTGRGPAVTLGAGVMQWQAYVHGAKNGYTILGGECPTVGAVGGFLQGGGVSSIHSFTRGLAVDQVLEYQVVSANGDLITANEDNNQDLFWALKGGGGGTFGVVTEATVRVFSDDPVTVTSTKIEAAAANVLFWKEGVHELLRLLQRFNNLHVAGQLVISAPTKDSLQAGLELHFANLTDETQAIQLLRSEARALETHGISASTSVRVQRKASSELRMKPDVYPPHYGILEASVLISAATFHANDGPALIASKLSGLTLKPNDILFTSNLGGRVSENTAIEIALHPAWREAAQLVTLVRVVEPSIEGKLSALNNLTARDVPILYSIDPAAKISYRNLGDPQEKEFQTRYWGADNYARLAATKAAWDPSHLFMTSLGVGSEVWDAEGICRKRRGFRAKASSLIGM.

An FAD-binding PCMH-type domain is found at 10–193; it reads QGRLPLYSAV…TEATVRVFSD (184 aa).

The protein belongs to the oxygen-dependent FAD-linked oxidoreductase family. FAD serves as cofactor.

It functions in the pathway alkaloid biosynthesis; ergot alkaloid biosynthesis. FAD-linked oxidoreductase; part of the gene cluster that mediates the biosynthesis of fungal ergot alkaloid. DmaW catalyzes the first step of ergot alkaloid biosynthesis by condensing dimethylallyl diphosphate (DMAP) and tryptophan to form 4-dimethylallyl-L-tryptophan. The second step is catalyzed by the methyltransferase easF that methylates 4-dimethylallyl-L-tryptophan in the presence of S-adenosyl-L-methionine, resulting in the formation of 4-dimethylallyl-L-abrine. The catalase easC and the FAD-dependent oxidoreductase easE then transform 4-dimethylallyl-L-abrine to chanoclavine-I which is further oxidized by easD in the presence of NAD(+), resulting in the formation of chanoclavine-I aldehyde. Agroclavine dehydrogenase easG then mediates the conversion of chanoclavine-I aldehyde to agroclavine via a non-enzymatic adduct reaction: the substrate is an iminium intermediate that is formed spontaneously from chanoclavine-I aldehyde in the presence of glutathione. The presence of easA is not required to complete this reaction. Further conversion of agroclavine to paspalic acid is a two-step process involving oxidation of agroclavine to elymoclavine and of elymoclavine to paspalic acid, the second step being performed by the elymoclavine oxidase cloA. Paspalic acid is then further converted to D-lysergic acid. Ergopeptines are assembled from D-lysergic acid and three different amino acids by the D-lysergyl-peptide-synthetases composed each of a monomudular and a trimodular nonribosomal peptide synthetase subunit. LpsB and lpsC encode the monomodular subunits responsible for D-lysergic acid activation and incorporation into the ergopeptine backbone. LpsA1 and A2 subunits encode the trimodular nonribosomal peptide synthetase assembling the tripeptide portion of ergopeptines. LpsA1 is responsible for formation of the major ergopeptine, ergotamine, and lpsA2 for alpha-ergocryptine, the minor ergopeptine of the total alkaloid mixture elaborated by C.purpurea. D-lysergyl-tripeptides are assembled by the nonribosomal peptide synthetases and released as N-(D-lysergyl-aminoacyl)-lactams. Cyclolization of the D-lysergyl-tripeptides is performed by the Fe(2+)/2-ketoglutarate-dependent dioxygenase easH which introduces a hydroxyl group into N-(D-lysergyl-aminoacyl)-lactam at alpha-C of the aminoacyl residue followed by spontaneous condensation with the terminal lactam carbonyl group. The chain is FAD-linked oxidoreductase easE from Claviceps purpurea (Ergot fungus).